A 595-amino-acid chain; its full sequence is Wee1-like protein kinase 1-B (595 aa).

The span at 1-17 (MNVQPRNMNVQPRNMNV) shows a compositional bias: polar residues. Residues 1-127 (MNVQPRNMNV…CPGTPPHKTF (127 aa)) form a disordered region. The span at 111-122 (PTSPIPECPGTP) shows a compositional bias: pro residues. The residue at position 186 (Thr-186) is a Phosphothreonine; by cdk1. Positions 248-518 (FHELEKIGSG…SVALVKHSVL (271 aa)) constitute a Protein kinase domain. Residues 254–262 (IGSGEFGSV) and Lys-277 contribute to the ATP site. Asp-375 serves as the catalytic Proton acceptor. The Mg(2+) site is built by Asn-380 and Asp-412. Residues 526-563 (AEQLRIELDAEKFKNALLQKELKKAQIAKAAAEERAHF) adopt a coiled-coil conformation.

It belongs to the protein kinase superfamily. Ser/Thr protein kinase family. WEE1 subfamily. Interacts (when phosphorylated at Thr-186) with pin1. Post-translationally, phosphorylation at Thr-186 during M-phase by cdk1 inhibits the kinase activity and leads to interaction with pin1. Zygotically expressed. Present in oocytes and postgastrula embryos (at least until the tailbud stage). Expression begins at the midblastula stage and increases after the early gastrula stage.

The protein resides in the nucleus. It catalyses the reaction L-tyrosyl-[protein] + ATP = O-phospho-L-tyrosyl-[protein] + ADP + H(+). Its function is as follows. Acts as a zygotic negative regulator of entry into mitosis (G2 to M transition) by protecting the nucleus from cytoplasmically activated cyclin B1-complexed cdk1 before the onset of mitosis by mediating phosphorylation of cdk1 on 'Tyr-15'. Specifically phosphorylates and inactivates cyclin B1-complexed cdk1 reaching a maximum during G2 phase and a minimum as cells enter M phase. Phosphorylation of cyclin B1-cdk1 occurs exclusively on 'Tyr-15' and phosphorylation of monomeric cdk1 does not occur. The polypeptide is Wee1-like protein kinase 1-B (wee1-b) (Xenopus laevis (African clawed frog)).